Here is a 368-residue protein sequence, read N- to C-terminus: Nucleotide pyrophosphatase/phosphodiesterase (368 aa).

The protein belongs to the metallophosphoesterase superfamily. As to quaternary structure, monomer and homomer. In terms of processing, glycosylated.

It is found in the plastid. The protein localises to the chloroplast. Hydrolyzes pyrophosphate, phosphodiester and phosphosulfate linkages of nucleotide-sugars, sulfonucleotides and nucleoside di and triphosphates. Highest activity observed with the substrates ADP-glucose and adenosine 5'-phosphosulfate. This chain is Nucleotide pyrophosphatase/phosphodiesterase, found in Hordeum vulgare (Barley).